The following is a 431-amino-acid chain: Transcription factor Sp7 (431 aa).

The interval S30–A56 is disordered. An N6-propionyllysine mark is found at K41 and K45. A Glycyl lysine isopeptide (Lys-Gly) (interchain with G-Cter in ubiquitin) cross-link involves residue K58. 2 disordered regions span residues T71–G115 and T154–Y260. The 9aaTAD signature appears at T156 to G164. A compositionally biased stretch (gly residues) spans N166–L178. Residue K230 forms a Glycyl lysine isopeptide (Lys-Gly) (interchain with G-Cter in ubiquitin) linkage. 3 consecutive C2H2-type zinc fingers follow at residues H294–H318, F324–H348, and F354–H376. An N6-propionyllysine mark is found at K361 and K371. The tract at residues D367 to I431 is disordered. Positions S403–P412 are enriched in polar residues.

Belongs to the Sp1 C2H2-type zinc-finger protein family. As to quaternary structure, interacts with RIOX1; the interaction is direct and inhibits transcription activator activity. Post-translationally, ubiquitination at leads to proteasomal degradation. SP7 is a short-live protein with an endogenous half-life of approximately 12 hours. In terms of processing, propionylated. Depropionylation at Lys-371 by SIRT7 activates transcription factor activity and positively regulates bone formation by osteoblasts. Restricted to bone-derived cell.

The protein localises to the nucleus. Its function is as follows. Transcriptional activator essential for osteoblast differentiation. Binds to SP1 and EKLF consensus sequences and to other G/C-rich sequences. This Homo sapiens (Human) protein is Transcription factor Sp7 (SP7).